A 321-amino-acid polypeptide reads, in one-letter code: Lipoyl synthase (321 aa).

Residues C68, C73, C79, C94, C98, C101, and S308 each contribute to the [4Fe-4S] cluster site. Residues 80-297 (FNHGTATFMI…KVLADELGFT (218 aa)) form the Radical SAM core domain.

The protein belongs to the radical SAM superfamily. Lipoyl synthase family. [4Fe-4S] cluster serves as cofactor.

It is found in the cytoplasm. It catalyses the reaction [[Fe-S] cluster scaffold protein carrying a second [4Fe-4S](2+) cluster] + N(6)-octanoyl-L-lysyl-[protein] + 2 oxidized [2Fe-2S]-[ferredoxin] + 2 S-adenosyl-L-methionine + 4 H(+) = [[Fe-S] cluster scaffold protein] + N(6)-[(R)-dihydrolipoyl]-L-lysyl-[protein] + 4 Fe(3+) + 2 hydrogen sulfide + 2 5'-deoxyadenosine + 2 L-methionine + 2 reduced [2Fe-2S]-[ferredoxin]. It functions in the pathway protein modification; protein lipoylation via endogenous pathway; protein N(6)-(lipoyl)lysine from octanoyl-[acyl-carrier-protein]: step 2/2. Its function is as follows. Catalyzes the radical-mediated insertion of two sulfur atoms into the C-6 and C-8 positions of the octanoyl moiety bound to the lipoyl domains of lipoate-dependent enzymes, thereby converting the octanoylated domains into lipoylated derivatives. The sequence is that of Lipoyl synthase from Shewanella denitrificans (strain OS217 / ATCC BAA-1090 / DSM 15013).